Here is an 857-residue protein sequence, read N- to C-terminus: Putative disease resistance protein At1g50180 (857 aa).

Residues 27–60 (IGDQVKQLQDELKRLNCFLKDADEKQHESERVRN) are a coiled coil. An NB-ARC domain is found at 148 to 461 (SLREQRQSFP…AEGMVMPVKH (314 aa)). 192–199 (GMGGLGKT) lines the ATP pocket. 4 LRR repeats span residues 653–678 (MTSL…SLSK), 680–703 (LKRL…DVTQ), 754–780 (LPNL…NLEN), and 791–816 (MMRL…RFLK).

This sequence belongs to the disease resistance NB-LRR family.

Potential disease resistance protein. This is Putative disease resistance protein At1g50180 from Arabidopsis thaliana (Mouse-ear cress).